We begin with the raw amino-acid sequence, 1195 residues long: Probable beta-tubulin polyglutamylase (1195 aa).

Residues 1–110 form a disordered region; that stretch reads MSQKDIYNKY…QTEMTDNQNE (110 aa). Acidic residues-rich tracts occupy residues 17-27 and 44-79; these read DQQEEDDDENQ and QGED…EENN. Coiled-coil stretches lie at residues 59-103 and 144-260; these read DEEQ…QQTE and QDMD…QSEQ. Over residues 80–89 the composition is skewed to low complexity; that stretch reads QDQQNNSESN. A compositionally biased stretch (polar residues) spans 90-110; it reads LQYDKTNQKNQQTEMTDNQNE. The segment at 281 to 343 is disordered; sequence PKNDVDQYTG…NKKEQAKKQQ (63 aa). Acidic residues predominate over residues 294-316; the sequence is DSGESDEEANNEDDDEDEDDESE. The segment covering 322 to 334 has biased composition (basic residues); sequence RKNKAQLLKKKNN. In terms of domain architecture, TTL spans 350 to 703; that stretch reads KQTLVLNVAD…TCKAKNEIIN (354 aa). Residues 500–503, K513, and D515 contribute to the ATP site; that span reads QRYL. The tract at residues 674-756 is c-MTBD region; that stretch reads PLDSYIKKNT…GFERIFPMED (83 aa). Positions 783–862 are disordered; it reads RNTKKVTEDP…ETIQCEDQEQ (80 aa). A compositionally biased stretch (polar residues) spans 825-849; sequence PNSQTTINKGIPGQNGQRPSSSQLN. Residues 850–860 show a composition bias toward acidic residues; the sequence is EEGETIQCEDQ.

Its subcellular location is the cytoplasm. It localises to the cytoskeleton. The protein resides in the cell projection. It is found in the cilium. The protein localises to the cilium basal body. Probable tubulin polyglutamylase with a strong preference for beta-tubulin. This is Probable beta-tubulin polyglutamylase (Ttll6a) from Tetrahymena thermophila (strain SB210).